A 134-amino-acid polypeptide reads, in one-letter code: Secreted RxLR effector protein 1 (134 aa).

A signal peptide spans 1–22 (MFCRSPLVAVILLVLATHIVLA). The disordered stretch occupies residues 32–60 (SETVPSDSSQTTRKSTRRTTSVDNKRRLR). Residues 37-52 (SDSSQTTRKSTRRTTS) are compositionally biased toward low complexity. Residues 57–79 (RRLRQQIMGKDGPVVNDVHAEER) carry the RxLR-dEER motif.

This sequence belongs to the RxLR effector family.

It localises to the secreted. Its subcellular location is the host nucleus. Its function is as follows. Effector that acts as a broad suppressor of cell death to interrupt plant immunity. Inhibits cell death induced by cell death-inducing proteins, including the PAMP elicitor INF1 from P.infestans. The polypeptide is Secreted RxLR effector protein 1 (Plasmopara viticola (Downy mildew of grapevine)).